Consider the following 106-residue polypeptide: Putative membrane protein insertion efficiency factor (106 aa).

It belongs to the UPF0161 family.

The protein localises to the cell inner membrane. Functionally, could be involved in insertion of integral membrane proteins into the membrane. The chain is Putative membrane protein insertion efficiency factor from Acinetobacter baylyi (strain ATCC 33305 / BD413 / ADP1).